We begin with the raw amino-acid sequence, 241 residues long: Triosephosphate isomerase (241 aa).

Position 9–11 (9–11 (NWK)) interacts with substrate. His-96 acts as the Electrophile in catalysis. The Proton acceptor role is filled by Glu-165. Substrate is bound by residues Gly-171, Ser-204, and 225–226 (GG).

It belongs to the triosephosphate isomerase family. Homodimer.

It is found in the cytoplasm. The enzyme catalyses D-glyceraldehyde 3-phosphate = dihydroxyacetone phosphate. It participates in carbohydrate biosynthesis; gluconeogenesis. Its pathway is carbohydrate degradation; glycolysis; D-glyceraldehyde 3-phosphate from glycerone phosphate: step 1/1. Functionally, involved in the gluconeogenesis. Catalyzes stereospecifically the conversion of dihydroxyacetone phosphate (DHAP) to D-glyceraldehyde-3-phosphate (G3P). This Trichodesmium erythraeum (strain IMS101) protein is Triosephosphate isomerase.